We begin with the raw amino-acid sequence, 981 residues long: Amidohydrolase tasK (981 aa).

The interval M1 to R36 is disordered. Over residues P7–A21 the composition is skewed to pro residues. The segment covering R24 to R36 has biased composition (basic residues). The chain crosses the membrane as a helical span at residues T40–W57. The tract at residues L86–G107 is disordered. Fe(2+) is bound by residues H187 and H189. Residues H187 and H189 each coordinate Zn(2+). N407 carries an N-linked (GlcNAc...) asparagine glycan. The tract at residues K819–T838 is disordered. The span at K823 to Q835 shows a compositional bias: low complexity. Residue N891 is glycosylated (N-linked (GlcNAc...) asparagine).

This sequence belongs to the metallo-dependent hydrolases superfamily. Requires Fe(2+) as cofactor. It depends on Mn(2+) as a cofactor. Zn(2+) serves as cofactor.

The protein resides in the membrane. In terms of biological role, amidohydrolase; part of the gene cluster that mediates the biosynthesis of the tetramic acids Sch210971 and Sch210972, potential anti-HIV fungal natural product that contain a decalin core. The PKS module of tasS together with the enoylreductase tasC catalyze the formation of the polyketide unit which is then conjugated to 4-hydroxyl-4-methyl glutamate (HMG) by the condensation domain of the tasS NRPS module. One unique structural feature of Sch210971 and Sch210972 is the tetramic acid motif proposed to be derived from the non-proteinogenic amino acid HMG, by a Dieckmann-type condensation catalyzed by the reductase domain of tasS. The aldolase tasA catalyzes the aldol condensation of 2 molecules of pyruvic acid to yield the intermediate 4-hydroxyl-4-methyl-2-oxoglutarate (HMOG), which can then be stereoselectively transaminated, may be by tasG, to form HMG. The Diels-Alderase tas3 then uses the Dieckmann product of tasS as substrate and catalyzes the Diels-Alder cycloaddition to form the decalin ring of Sch210971 and Sch210972. This Hapsidospora irregularis protein is Amidohydrolase tasK.